Reading from the N-terminus, the 345-residue chain is Dihydroorotate dehydrogenase (quinone) (345 aa).

Residues A65–K69 and T89 each bind FMN. K69 lines the substrate pocket. N114 to F118 lines the substrate pocket. N142 and N175 together coordinate FMN. N175 serves as a coordination point for substrate. S178 acts as the Nucleophile in catalysis. Position 180 (N180) interacts with substrate. Positions 220 and 248 each coordinate FMN. Position 249 to 250 (N249 to T250) interacts with substrate. Residues G271, G300, and Y321–T322 contribute to the FMN site.

It belongs to the dihydroorotate dehydrogenase family. Type 2 subfamily. As to quaternary structure, monomer. FMN is required as a cofactor.

It is found in the cell membrane. The catalysed reaction is (S)-dihydroorotate + a quinone = orotate + a quinol. It participates in pyrimidine metabolism; UMP biosynthesis via de novo pathway; orotate from (S)-dihydroorotate (quinone route): step 1/1. Its function is as follows. Catalyzes the conversion of dihydroorotate to orotate with quinone as electron acceptor. In Burkholderia lata (strain ATCC 17760 / DSM 23089 / LMG 22485 / NCIMB 9086 / R18194 / 383), this protein is Dihydroorotate dehydrogenase (quinone).